Reading from the N-terminus, the 130-residue chain is Large ribosomal subunit protein bL17 (130 aa).

Belongs to the bacterial ribosomal protein bL17 family. Part of the 50S ribosomal subunit. Contacts protein L32.

The chain is Large ribosomal subunit protein bL17 from Azotobacter vinelandii (strain DJ / ATCC BAA-1303).